The primary structure comprises 268 residues: NH(3)-dependent NAD(+) synthetase (268 aa).

Residue 46-53 (GVSGGQDS) coordinates ATP. Aspartate 52 serves as a coordination point for Mg(2+). Arginine 140 contributes to the deamido-NAD(+) binding site. Threonine 160 contributes to the ATP binding site. Glutamate 165 is a binding site for Mg(2+). Deamido-NAD(+)-binding residues include lysine 173 and aspartate 180. Lysine 189 contributes to the ATP binding site. A deamido-NAD(+)-binding site is contributed by 260-261 (HK).

The protein belongs to the NAD synthetase family. In terms of assembly, homodimer.

The enzyme catalyses deamido-NAD(+) + NH4(+) + ATP = AMP + diphosphate + NAD(+) + H(+). It participates in cofactor biosynthesis; NAD(+) biosynthesis; NAD(+) from deamido-NAD(+) (ammonia route): step 1/1. Functionally, catalyzes the ATP-dependent amidation of deamido-NAD to form NAD. Uses ammonia as a nitrogen source. In Buchnera aphidicola subsp. Acyrthosiphon pisum (strain APS) (Acyrthosiphon pisum symbiotic bacterium), this protein is NH(3)-dependent NAD(+) synthetase.